The primary structure comprises 142 residues: UPF0305 protein MK0666 (142 aa).

It belongs to the UPF0305 family.

The chain is UPF0305 protein MK0666 from Methanopyrus kandleri (strain AV19 / DSM 6324 / JCM 9639 / NBRC 100938).